Reading from the N-terminus, the 1087-residue chain is Voltage-gated inwardly rectifying potassium channel KCNH3 (1087 aa).

Topologically, residues 1–228 (MPAMRGLLAP…HCGALRATWD (228 aa)) are cytoplasmic. The 73-residue stretch at 18–90 (IATRFDGTHS…QQIRKALDEH (73 aa)) folds into the PAS domain. The PAC domain occupies 93-145 (FKAELILYRKSGLPFWCLLDVIPIKNEKGEVALFLVSHKDISETKNRGGPDNW). The segment covering 137–150 (KNRGGPDNWKERGG) has biased composition (basic and acidic residues). Positions 137 to 161 (KNRGGPDNWKERGGGRRRYGRAGSK) are disordered. A helical membrane pass occupies residues 229–249 (GFILLATLYVAVTVPYSVCVS). At 250-259 (TAREPSAARG) the chain is on the extracellular side. Residues 260 to 280 (PPSVCDLAVEVLFILDIVLNF) form a helical membrane-spanning segment. Residues 281–302 (RTTFVSKSGQVVFAPKSICLHY) lie on the Cytoplasmic side of the membrane. Residues 303-323 (VTTWFLLDVIAALPFDLLHAF) form a helical membrane-spanning segment. At 324 to 331 (KVNVYVGA) the chain is on the extracellular side. The helical; Voltage-sensor transmembrane segment at 332–352 (HLLKTVRLLRLLRLLPRLDRY) threads the bilayer. Over 353 to 361 (SQYSAVVLT) the chain is Cytoplasmic. A helical transmembrane segment spans residues 362–382 (LLMAVFALLAHWVACVWFYIG). Topologically, residues 383-456 (QQEIENSESE…GGPSLRSAYI (74 aa)) are extracellular. A disordered region spans residues 416–436 (SPDGGNSSGQSENCSSSGGGS). The segment covering 419-431 (GGNSSGQSENCSS) has biased composition (low complexity). N-linked (GlcNAc...) asparagine glycans are attached at residues asparagine 421, asparagine 428, and asparagine 439. Positions 457–477 (TSLYFALSSLTSVGFGNVSAN) form an intramembrane region, pore-forming. A Selectivity filter motif is present at residues 468–473 (SVGFGN). Residues 478–482 (TDTEK) lie on the Extracellular side of the membrane. A helical membrane pass occupies residues 483–503 (IFSICTMLIGALMHAVVFGNV). The Cytoplasmic segment spans residues 504 to 1087 (TAIIQRMYAR…QWTQEEGTGV (584 aa)). 585–700 (LFEAASRGCL…FAPRFSRGLR (116 aa)) contacts a nucleoside 3',5'-cyclic phosphate. Disordered regions lie at residues 733–813 (EKET…LQLP) and 975–1061 (LMAP…PWDP). The span at 776–788 (TAPRPRLGGRGRP) shows a compositional bias: basic residues.

It belongs to the potassium channel family. H (Eag) (TC 1.A.1.20) subfamily. Kv12.2/KCNH3 sub-subfamily. The potassium channel is probably composed of a homo- or heterotetrameric complex of pore-forming alpha subunits that can associate with modulating beta subunits. Interacts with KCNE1 and KCNE3; these interactions regulate KCNH3 trafficking to the plasma membrane and its subsequent voltage-gated potassium channel activity. In terms of processing, N-glycosylated. N-glycosylation mediates traffick to the cell membrane but is not necessary for voltage-gated potassium channel activity. In terms of tissue distribution, highly expressed in adult and embryonic brain, in particular in cerebellum, brain stem, hippocampus, cortex and striatum. Also found in pituitary.

It is found in the cell membrane. The catalysed reaction is K(+)(in) = K(+)(out). Functionally, pore-forming (alpha) subunit of a voltage-gated inwardly rectifying potassium channel. Charactherized by a fast rate of activation during depolarization followed by a rapid inactivation at much more depolarized value causing inward rectification due to a C-type inactivation mechanism. Exhibits a rapid recovery from inactivation. The polypeptide is Voltage-gated inwardly rectifying potassium channel KCNH3 (Rattus norvegicus (Rat)).